The following is a 458-amino-acid chain: Retinoic acid receptor alpha (458 aa).

Residues 1 to 87 are modulating; sequence MSSKDNTCPP…PPPLPRIYKP (87 aa). The interval 39–78 is disordered; that stretch reads GGLPGVQHQPPLSGYSTPSPATIETQSTSSEEIVPSPPTP. Over residues 52 to 69 the composition is skewed to polar residues; that stretch reads GYSTPSPATIETQSTSSE. NR C4-type zinc fingers lie at residues 88-108 and 124-148; these read CFVC…CEGC and CHRD…LQKC. Positions 88–153 form a DNA-binding region, nuclear receptor; the sequence is CFVCQDKSSG…RLQKCFEVGM (66 aa). Residues 154–182 form a hinge region; it reads SKESVRNDRNKKKKESPKPEAIESYILSP. Residues 183-417 enclose the NR LBD domain; that stretch reads ETQDLIEKVQ…LIQEMLENSE (235 aa). The 9aaTAD motif lies at 407-415; it reads PLIQEMLEN. A disordered region spans residues 419–458; it reads LDTLGGGASSDAPVTPVAPGSCSPSLSPSSTHSSPSTHSP. A compositionally biased stretch (low complexity) spans 439 to 458; sequence SCSPSLSPSSTHSSPSTHSP.

It belongs to the nuclear hormone receptor family. NR1 subfamily. As to quaternary structure, heterodimer; with an rxr molecule. Binds DNA preferentially as a rar/rxr heterodimer.

The protein localises to the nucleus. Functionally, receptor for retinoic acid. Retinoic acid receptors bind as heterodimers to their target response elements in response to their ligands, all-trans or 9-cis retinoic acid, and regulate gene expression in various biological processes. The rar/rxr heterodimers bind to the retinoic acid response elements (RARE) composed of tandem 5'-AGGTCA-3' sites known as DR1-DR5. Required for primary neurogenesis and for anteroposterior neural patterning. The sequence is that of Retinoic acid receptor alpha (rara) from Xenopus laevis (African clawed frog).